A 182-amino-acid polypeptide reads, in one-letter code: Large ribosomal subunit protein uL15 (182 aa).

The segment at 1 to 52 (MDLSSLRPAKGAVKNKKRIGRGPGSGNGTTAGKGNKGQQSRSGYTRPVSEGG) is disordered. Residues 21–35 (RGPGSGNGTTAGKGN) are compositionally biased toward gly residues.

It belongs to the universal ribosomal protein uL15 family. Part of the 50S ribosomal subunit.

Binds to the 23S rRNA. The polypeptide is Large ribosomal subunit protein uL15 (Chlorobium phaeobacteroides (strain BS1)).